The primary structure comprises 366 residues: Prostaglandin F2-alpha receptor (366 aa).

Residues 1–31 (MSINSSKQPASSAAGLIANTTCQTENRLSVF) are Extracellular-facing. 2 N-linked (GlcNAc...) asparagine glycosylation sites follow: Asn4 and Asn19. A helical membrane pass occupies residues 32-55 (FSIIFMTVGIVSNSLAIAILMKAY). The Cytoplasmic segment spans residues 56–69 (QRFRRKSKASFLLL). Residues 70–90 (ASGLVITDFFGHLINGGIAVF) form a helical membrane-spanning segment. Residues 91-109 (VYASDKDWIRFDQSNILCS) are Extracellular-facing. Cys108 and Cys186 are disulfide-bonded. Residues 110–131 (VFGISMVFSGLCPLFLGSTMAI) traverse the membrane as a helical segment. The Cytoplasmic segment spans residues 132–152 (ERCIGVTNPLFHSTKITSKHV). The helical transmembrane segment at 153–175 (KMILSGVCMFAVFVALLPILGHR) threads the bilayer. At 176–198 (DYQIQASRTWCFYNTEHIEDWED) the chain is on the extracellular side. Residues 199 to 224 (RFYLLFFSSLGLLALGISFSCNAVTG) traverse the membrane as a helical segment. At 225–250 (VTLLRVKFRSQQHRQGRSHHLEMVIQ) the chain is on the cytoplasmic side. Residues 251-267 (LLAIMCVSCVCWSPFLV) traverse the membrane as a helical segment. Residues 268–285 (TMANIAINGNNSPVTCET) lie on the Extracellular side of the membrane. Residues 286 to 307 (TLFALRMATWNQILDPWVYILL) form a helical membrane-spanning segment. Residues 308–366 (RKAVLRNLYKLASRCCGVNIISLHIWELSSIKNSLKVAAISESPAAEKENQQASSEAGL) lie on the Cytoplasmic side of the membrane.

The protein belongs to the G-protein coupled receptor 1 family. Highest expression in pregnant ovary. Also found in a low extent in the kidney. In the brain, expressed in astrocytes and oligodendrocytes, and meningeal fibroblasts, but not in migroglia cells.

Its subcellular location is the cell membrane. In terms of biological role, receptor for prostaglandin F2-alpha (PGF2-alpha). The activity of this receptor is mediated by G proteins which activate a phosphatidylinositol-calcium second messenger system. Initiates luteolysis in the corpus luteum. In Rattus norvegicus (Rat), this protein is Prostaglandin F2-alpha receptor (Ptgfr).